Consider the following 177-residue polypeptide: 3-hydroxydecanoyl-[acyl-carrier-protein] dehydratase (177 aa).

The active site involves His-76.

This sequence belongs to the thioester dehydratase family. FabA subfamily. Homodimer.

The protein localises to the cytoplasm. The catalysed reaction is a (3R)-hydroxyacyl-[ACP] = a (2E)-enoyl-[ACP] + H2O. The enzyme catalyses (3R)-hydroxydecanoyl-[ACP] = (2E)-decenoyl-[ACP] + H2O. It carries out the reaction (2E)-decenoyl-[ACP] = (3Z)-decenoyl-[ACP]. It participates in lipid metabolism; fatty acid biosynthesis. Its function is as follows. Necessary for the introduction of cis unsaturation into fatty acids. Catalyzes the dehydration of (3R)-3-hydroxydecanoyl-ACP to E-(2)-decenoyl-ACP and then its isomerization to Z-(3)-decenoyl-ACP. Can catalyze the dehydratase reaction for beta-hydroxyacyl-ACPs with saturated chain lengths up to 16:0, being most active on intermediate chain length. The polypeptide is 3-hydroxydecanoyl-[acyl-carrier-protein] dehydratase (Haemophilus influenzae (strain PittGG)).